The sequence spans 407 residues: 1-deoxy-D-xylulose 5-phosphate reductoisomerase (407 aa).

NADPH contacts are provided by T25, G26, S27, I28, N53, and N136. Residue K137 coordinates 1-deoxy-D-xylulose 5-phosphate. Residue E138 coordinates NADPH. D162 lines the Mn(2+) pocket. Residues S163, E164, S188, and H211 each coordinate 1-deoxy-D-xylulose 5-phosphate. A Mn(2+)-binding site is contributed by E164. G217 contacts NADPH. 1-deoxy-D-xylulose 5-phosphate contacts are provided by S224, N229, K230, and E233. E233 provides a ligand contact to Mn(2+).

The protein belongs to the DXR family. It depends on Mg(2+) as a cofactor. The cofactor is Mn(2+).

The catalysed reaction is 2-C-methyl-D-erythritol 4-phosphate + NADP(+) = 1-deoxy-D-xylulose 5-phosphate + NADPH + H(+). The protein operates within isoprenoid biosynthesis; isopentenyl diphosphate biosynthesis via DXP pathway; isopentenyl diphosphate from 1-deoxy-D-xylulose 5-phosphate: step 1/6. Functionally, catalyzes the NADPH-dependent rearrangement and reduction of 1-deoxy-D-xylulose-5-phosphate (DXP) to 2-C-methyl-D-erythritol 4-phosphate (MEP). The sequence is that of 1-deoxy-D-xylulose 5-phosphate reductoisomerase from Rhodopseudomonas palustris (strain HaA2).